Reading from the N-terminus, the 193-residue chain is Peptidyl-tRNA hydrolase (193 aa).

Residue tyrosine 14 participates in tRNA binding. Histidine 19 acts as the Proton acceptor in catalysis. TRNA-binding residues include phenylalanine 64, asparagine 66, and asparagine 112.

This sequence belongs to the PTH family. Monomer.

It is found in the cytoplasm. The enzyme catalyses an N-acyl-L-alpha-aminoacyl-tRNA + H2O = an N-acyl-L-amino acid + a tRNA + H(+). In terms of biological role, hydrolyzes ribosome-free peptidyl-tRNAs (with 1 or more amino acids incorporated), which drop off the ribosome during protein synthesis, or as a result of ribosome stalling. Its function is as follows. Catalyzes the release of premature peptidyl moieties from peptidyl-tRNA molecules trapped in stalled 50S ribosomal subunits, and thus maintains levels of free tRNAs and 50S ribosomes. In Bartonella bacilliformis (strain ATCC 35685 / KC583 / Herrer 020/F12,63), this protein is Peptidyl-tRNA hydrolase.